Here is a 279-residue protein sequence, read N- to C-terminus: Protoheme IX farnesyltransferase (279 aa).

Transmembrane regions (helical) follow at residues 5–25 (LILLKPRVIWLLILASLAGYL), 33–53 (IAQAFSLLLVAFLSTGGAAAF), 84–103 (LAYSLVLSALGIALGFLLLG), 108–125 (LFVFLGWFFYAVVYTVIL), 133–153 (ILGGGFAGNATFLGGYALGAG), 159–179 (AVLISFAIYLWIPSHIWALAY), 201–221 (AAVAIISLLNLASAAYIMTLY), 222–242 (LAFGGGLLGGALVAAGVVATI), and 256–276 (AMWKMYKASSPVLTLFLLALI).

The protein belongs to the UbiA prenyltransferase family. Protoheme IX farnesyltransferase subfamily.

The protein localises to the cell membrane. The catalysed reaction is heme b + (2E,6E)-farnesyl diphosphate + H2O = Fe(II)-heme o + diphosphate. It participates in porphyrin-containing compound metabolism; heme O biosynthesis; heme O from protoheme: step 1/1. In terms of biological role, converts heme B (protoheme IX) to heme O by substitution of the vinyl group on carbon 2 of heme B porphyrin ring with a hydroxyethyl farnesyl side group. The polypeptide is Protoheme IX farnesyltransferase (Pyrobaculum arsenaticum (strain DSM 13514 / JCM 11321 / PZ6)).